The following is a 481-amino-acid chain: Docking protein 1 (481 aa).

The residue at position 1 (methionine 1) is an N-acetylmethionine. One can recognise a PH domain in the interval 4 to 119 (AVMEGPLFLQ…WVQTLCRNAF (116 aa)). Serine 48 is subject to Phosphoserine. In terms of domain architecture, IRS-type PTB spans 151 to 259 (EGSQFWVTVQ…HRQKAQGKAG (109 aa)). Serine 269 and serine 291 each carry phosphoserine. The tract at residues 270–293 (HEGEVAEGKLPSPPGPQELLDSPP) is disordered. Phosphotyrosine is present on tyrosine 296. The interval 307-329 (PCPSQDSLYSDPLDSTSAQAGEG) is disordered. Positions 310-325 (SQDSLYSDPLDSTSAQ) are enriched in polar residues. A phosphotyrosine mark is found at tyrosine 337 and tyrosine 341. A Phosphotyrosine; by INSR modification is found at tyrosine 362. At tyrosine 377 the chain carries Phosphotyrosine. Position 398 is a phosphotyrosine; by INSR (tyrosine 398). Positions 404–481 (PATDDYAVPP…KTGVKSEGST (78 aa)) are disordered. Tyrosine 409 carries the post-translational modification Phosphotyrosine. Serine 416 carries the post-translational modification Phosphoserine. Residues 436–458 (ATGSGIKSHNSALYSQVQKSGAS) show a composition bias toward polar residues. At tyrosine 449 the chain carries Phosphotyrosine. Phosphoserine is present on serine 460.

Belongs to the DOK family. Type A subfamily. In terms of assembly, interacts with ABL1. Interacts with RasGAP and INPP5D/SHIP1. Interacts directly with phosphorylated ITGB3. Interacts with SRMS (via the SH2 and SH3 domains). In terms of processing, constitutively tyrosine-phosphorylated. Phosphorylated by TEC. Phosphorylated by LYN. Phosphorylated on tyrosine residues by the insulin receptor kinase. Results in the negative regulation of the insulin signaling pathway. Phosphorylated on tyrosine residues by SRMS. As to expression, expressed in pancreas, heart, leukocyte and spleen. Expressed in both resting and activated peripheral blood T-cells. Expressed in breast cancer.

The protein localises to the cytoplasm. Its subcellular location is the nucleus. The protein resides in the perinuclear region. Its function is as follows. DOK proteins are enzymatically inert adaptor or scaffolding proteins. They provide a docking platform for the assembly of multimolecular signaling complexes. DOK1 appears to be a negative regulator of the insulin signaling pathway. Modulates integrin activation by competing with talin for the same binding site on ITGB3. This is Docking protein 1 (DOK1) from Homo sapiens (Human).